A 710-amino-acid chain; its full sequence is Denticleless protein homolog A (710 aa).

WD repeat units follow at residues 47-89 (GMPV…MQRL), 96-135 (AHTNAVFDIAWVPGEHKLVTASGDQTAKLWDVMAGELIGE), and 138-178 (GHQC…KDGF). The DDB1-binding motif motif lies at 168-171 (WDTR). The Nuclear localization signal signature appears at 197-204 (PSKMKKRK). WD repeat units follow at residues 215–254 (DSQQSVTVVIFQDEYTIISAGAVDGVVKIWDLRKNYSAYR), 270–309 (TRKLGYSSLVLDPTGTNLFASCTDDNVYMFNATGLKTDPV), 314–355 (GHQN…AAPV), and 359–398 (GHCQEVTSVAWCQSDFTKIATCSDDNTVRVWRLKRSCEDS). Residues 244-247 (WDLR) carry the DDB1-binding motif motif. Disordered stretches follow at residues 428-534 (GKPS…VSSA) and 652-698 (ALGH…PGSM). Residues 430–450 (PSVMSSSSLTSSPTPASCAPS) are compositionally biased toward low complexity. Polar residues-rich tracts occupy residues 504–516 (TPKSSTRTDTKTP) and 659–690 (SSPQNKASGSPSSRTSTTKKQQPRNAPNSPVS).

Belongs to the WD repeat cdt2 family. Component of the DCX(DTL) E3 ubiquitin ligase complex, at least composed of cul4 (cul4a or cul4b), ddb1, dtl/cdt2 and rbx1.

The protein localises to the nucleus. It is found in the cytoplasm. Its subcellular location is the cytoskeleton. It localises to the microtubule organizing center. The protein resides in the centrosome. The protein localises to the chromosome. The protein operates within protein modification; protein ubiquitination. Substrate-specific adapter of a DCX (DDB1-CUL4-X-box) E3 ubiquitin-protein ligase complex required for cell cycle control, DNA damage response and translesion DNA synthesis. The DCX(DTL) complex, also named CRL4(CDT2) complex, mediates the polyubiquitination and subsequent degradation of CDT1, CDKN1A/p21(CIP1), KMT5A and SDE2. CDT1 degradation in response to DNA damage is necessary to ensure proper cell cycle regulation of DNA replication. CDKN1A/p21(CIP1) degradation during S phase or following UV irradiation is essential to control replication licensing. KMT5A degradation is also important for a proper regulation of mechanisms such as TGF-beta signaling, cell cycle progression, DNA repair and cell migration. Most substrates require their interaction with PCNA for their polyubiquitination: substrates interact with PCNA via their PIP-box, and those containing the 'K+4' motif in the PIP box, recruit the DCX(DTL) complex, leading to their degradation. In undamaged proliferating cells, the DCX(DTL) complex also promotes the 'Lys-164' monoubiquitination of PCNA, thereby being involved in PCNA-dependent translesion DNA synthesis. May play a role in the regulation of the circadian clock. The protein is Denticleless protein homolog A (dtl-a) of Xenopus laevis (African clawed frog).